The chain runs to 89 residues: Small ribosomal subunit protein uS17 (89 aa).

It belongs to the universal ribosomal protein uS17 family. As to quaternary structure, part of the 30S ribosomal subunit.

Its function is as follows. One of the primary rRNA binding proteins, it binds specifically to the 5'-end of 16S ribosomal RNA. This is Small ribosomal subunit protein uS17 from Phytoplasma mali (strain AT).